The primary structure comprises 248 residues: MAGHSKWANIKHKKAKEDAKRGKIFTKLIREITVAARLGGGDKDANPRLRAAIATALANNMSKDTIERAIVKGAGGDESANVEEVRYEGYGPGGVAIIVDCMTDNRNRTVGEVRHAFTKSGGNLGTDGSVAYMFTKRGIISFAPGVDEDALMEVALEAGAEDIITHEDGSIDVYTDPHDFSDIQEVLIEKGFNSENAEVTFDAETKAELDTETAEKVMALIDKLEDLDYVQSVYSNANFTQELIEQIG.

The protein belongs to the TACO1 family.

Its subcellular location is the cytoplasm. The chain is Probable transcriptional regulatory protein FTL_0929 from Francisella tularensis subsp. holarctica (strain LVS).